Reading from the N-terminus, the 146-residue chain is Large ribosomal subunit protein uL15 (146 aa).

The segment at 1–56 is disordered; the sequence is MSDIQLNTLKPAEGSKHAKRRVGRGIGSGLGKTAGRGHKGQKSRSGGFHKVGFEGG. Residues 24–34 are compositionally biased toward gly residues; that stretch reads RGIGSGLGKTA.

The protein belongs to the universal ribosomal protein uL15 family. In terms of assembly, part of the 50S ribosomal subunit.

In terms of biological role, binds to the 23S rRNA. The protein is Large ribosomal subunit protein uL15 of Bordetella bronchiseptica (strain ATCC BAA-588 / NCTC 13252 / RB50) (Alcaligenes bronchisepticus).